The primary structure comprises 786 residues: UPF0313 protein SO_0311 (786 aa).

Residues 371–649 enclose the Radical SAM core domain; that stretch reads AYDMIKTSIN…KALLRYHDPA (279 aa). [4Fe-4S] cluster contacts are provided by Cys385, Cys389, and Cys392. Disordered stretches follow at residues 669-688 and 698-786; these read NSPN…PKWM and LTRF…QQAK. 2 stretches are compositionally biased toward basic and acidic residues: residues 679–688 and 706–717; these read GRNERGPKWM and FDERKGKGDAKG. Residues 718–731 are compositionally biased toward low complexity; the sequence is KPSASKPKGPKSGA. The segment covering 732 to 741 has biased composition (polar residues); it reads NAPQSQQPKT.

It belongs to the UPF0313 family. [4Fe-4S] cluster is required as a cofactor.

The polypeptide is UPF0313 protein SO_0311 (Shewanella oneidensis (strain ATCC 700550 / JCM 31522 / CIP 106686 / LMG 19005 / NCIMB 14063 / MR-1)).